Here is a 319-residue protein sequence, read N- to C-terminus: Phospho-N-acetylmuramoyl-pentapeptide-transferase (319 aa).

10 helical membrane-spanning segments follow: residues 5–25 (LIPFISSFALTVIFLPLFIGF), 51–71 (TMGGVVFMLAGVISTLWVLIW), 79–99 (AWILIIAFLGYGIIGFLDDGI), 116–136 (LGQIIIAALIITLAFSDHFAF), 149–169 (SFLFSLFVLFWLVGFSNAVNL), 172–192 (GLDGLATGLSIIAYATYAWIA), 197–217 (NWVIVVFTLSVIGGLVGFFIF), 224–244 (IFMGDAGSLALGGGLATVSIF), 252–272 (LLIGIVFVLETLSVILQVISF), and 299–319 (VDIVFWIVGLIGSIIYLIIWG).

This sequence belongs to the glycosyltransferase 4 family. MraY subfamily. Mg(2+) serves as cofactor.

The protein resides in the cell membrane. The catalysed reaction is UDP-N-acetyl-alpha-D-muramoyl-L-alanyl-gamma-D-glutamyl-L-lysyl-D-alanyl-D-alanine + di-trans,octa-cis-undecaprenyl phosphate = Mur2Ac(oyl-L-Ala-gamma-D-Glu-L-Lys-D-Ala-D-Ala)-di-trans,octa-cis-undecaprenyl diphosphate + UMP. It participates in cell wall biogenesis; peptidoglycan biosynthesis. Its function is as follows. Catalyzes the initial step of the lipid cycle reactions in the biosynthesis of the cell wall peptidoglycan: transfers peptidoglycan precursor phospho-MurNAc-pentapeptide from UDP-MurNAc-pentapeptide onto the lipid carrier undecaprenyl phosphate, yielding undecaprenyl-pyrophosphoryl-MurNAc-pentapeptide, known as lipid I. The chain is Phospho-N-acetylmuramoyl-pentapeptide-transferase from Lactobacillus johnsonii (strain CNCM I-12250 / La1 / NCC 533).